The chain runs to 178 residues: Large ribosomal subunit protein uL6 (178 aa).

Belongs to the universal ribosomal protein uL6 family. As to quaternary structure, part of the 50S ribosomal subunit.

Its function is as follows. This protein binds to the 23S rRNA, and is important in its secondary structure. It is located near the subunit interface in the base of the L7/L12 stalk, and near the tRNA binding site of the peptidyltransferase center. This chain is Large ribosomal subunit protein uL6, found in Wolinella succinogenes (strain ATCC 29543 / DSM 1740 / CCUG 13145 / JCM 31913 / LMG 7466 / NCTC 11488 / FDC 602W) (Vibrio succinogenes).